Consider the following 664-residue polypeptide: Macoilin (664 aa).

4 helical membrane passes run Thr-28–Leu-48, Ala-75–Ile-95, Val-120–Phe-140, and Phe-154–Val-174. Over residues Arg-253–Lys-265 the composition is skewed to basic and acidic residues. Positions Arg-253–Asn-274 are disordered. Position 305 is a phosphoserine (Ser-305). Residues Lys-320–Ser-348 show a composition bias toward polar residues. Positions Lys-320–Asn-375 are disordered. Residue Asn-324 is glycosylated (N-linked (GlcNAc...) asparagine). Phosphoserine is present on Ser-332. Asn-340 and Asn-452 each carry an N-linked (GlcNAc...) asparagine glycan. A disordered region spans residues Thr-630–Lys-664. Phosphoserine occurs at positions 631 and 634. Asn-655 carries an N-linked (GlcNAc...) asparagine glycan.

Belongs to the macoilin family.

The protein localises to the rough endoplasmic reticulum membrane. The protein resides in the nucleus membrane. Plays a role in the regulation of neuronal activity. The chain is Macoilin (MACO1) from Canis lupus familiaris (Dog).